We begin with the raw amino-acid sequence, 154 residues long: Endoribonuclease YbeY (154 aa).

3 residues coordinate Zn(2+): H114, H118, and H124.

This sequence belongs to the endoribonuclease YbeY family. The cofactor is Zn(2+).

It localises to the cytoplasm. Single strand-specific metallo-endoribonuclease involved in late-stage 70S ribosome quality control and in maturation of the 3' terminus of the 16S rRNA. This Haemophilus influenzae (strain PittEE) protein is Endoribonuclease YbeY.